The primary structure comprises 306 residues: Pantothenate kinase (306 aa).

91–98 (GSVAVGKS) is an ATP binding site.

This sequence belongs to the prokaryotic pantothenate kinase family.

Its subcellular location is the cytoplasm. The enzyme catalyses (R)-pantothenate + ATP = (R)-4'-phosphopantothenate + ADP + H(+). It participates in cofactor biosynthesis; coenzyme A biosynthesis; CoA from (R)-pantothenate: step 1/5. This is Pantothenate kinase (coaA) from Streptococcus pyogenes serotype M3 (strain ATCC BAA-595 / MGAS315).